The chain runs to 436 residues: Adenylosuccinate synthetase (436 aa).

GTP is bound by residues 12–18 (GDEGKGK) and 40–42 (GHT). Residue D13 is the Proton acceptor of the active site. 2 residues coordinate Mg(2+): D13 and G40. IMP is bound by residues 13–16 (DEGK), 38–41 (NAGH), T128, R142, Q223, T238, and R302. H41 serves as the catalytic Proton donor. Substrate is bound at residue 298-304 (TTTGRRR). Residues R304, 330–332 (KLD), and 412–414 (SLG) contribute to the GTP site.

Belongs to the adenylosuccinate synthetase family. As to quaternary structure, homodimer. Mg(2+) is required as a cofactor.

It localises to the cytoplasm. The catalysed reaction is IMP + L-aspartate + GTP = N(6)-(1,2-dicarboxyethyl)-AMP + GDP + phosphate + 2 H(+). It participates in purine metabolism; AMP biosynthesis via de novo pathway; AMP from IMP: step 1/2. In terms of biological role, plays an important role in the de novo pathway of purine nucleotide biosynthesis. Catalyzes the first committed step in the biosynthesis of AMP from IMP. The chain is Adenylosuccinate synthetase from Prochlorococcus marinus (strain AS9601).